The primary structure comprises 273 residues: Type II pantothenate kinase (273 aa).

ATP is bound at residue 8-15 (DAGGTLTK). Residue Glu76 is the Proton acceptor of the active site. ATP is bound by residues Thr105, 127–131 (GGTIM), Phe143, and Ser230.

Belongs to the type II pantothenate kinase family. In terms of assembly, homodimer.

It is found in the cytoplasm. It carries out the reaction (R)-pantothenate + ATP = (R)-4'-phosphopantothenate + ADP + H(+). It functions in the pathway cofactor biosynthesis; coenzyme A biosynthesis; CoA from (R)-pantothenate: step 1/5. Catalyzes the phosphorylation of pantothenate (Pan), the first step in CoA biosynthesis. The protein is Type II pantothenate kinase of Bacillus cereus (strain G9842).